The chain runs to 1342 residues: DNA-directed RNA polymerase subunit beta (1342 aa).

This sequence belongs to the RNA polymerase beta chain family. The RNAP catalytic core consists of 2 alpha, 1 beta, 1 beta' and 1 omega subunit. When a sigma factor is associated with the core the holoenzyme is formed, which can initiate transcription.

The enzyme catalyses RNA(n) + a ribonucleoside 5'-triphosphate = RNA(n+1) + diphosphate. DNA-dependent RNA polymerase catalyzes the transcription of DNA into RNA using the four ribonucleoside triphosphates as substrates. This chain is DNA-directed RNA polymerase subunit beta, found in Aliivibrio fischeri (strain ATCC 700601 / ES114) (Vibrio fischeri).